The following is a 778-amino-acid chain: Melanoma-associated antigen D1 (778 aa).

3 disordered regions span residues 41–60, 78–123, and 182–333; these read PTNQATAAASPQSSQPPTAN, FKVQ…KGPN, and KAWN…PAWQ. Position 92 is a phosphotyrosine (Tyr92). 5 stretches are compositionally biased toward polar residues: residues 104–118, 185–211, 225–240, 253–263, and 300–319; these read PNTQPKAAFKSQNAT, NDTTKAPTADTQTQNVNQAKMATSQAD, TAQTSADGSQAQNLES, NNLNVEENSSG, and LAWQNPSGWQNQTARQTPPA. 19 tandem repeats follow at residues 296–301, 302–307, 308–313, 332–337, 338–343, 344–349, 350–355, 356–361, 362–367, 368–373, 374–379, 380–385, 386–391, 392–397, 398–403, 404–409, 410–415, 416–421, and 422–427. The segment at 296 to 444 is 22 X 6 AA tandem repeats of W-[PQ]-X-P-X-X; the sequence is WQTPLAWQNP…IPPDWQNLRP (149 aa). The tract at residues 376–412 is disordered; it reads NPPGWQTPPGWQTPPGWQGPPDWQGPPDWPLPPDWPL. Residues 377 to 397 are compositionally biased toward low complexity; that stretch reads PPGWQTPPGWQTPPGWQGPPD. Positions 398–412 are enriched in pro residues; it reads WQGPPDWPLPPDWPL. A 20; approximate repeat occupies 428–432; that stretch reads WIPAD. A run of 2 repeats spans residues 433–438 and 439–444. Positions 440-455 are enriched in low complexity; sequence QNLRPSPNLRPSPNSR. Residues 440 to 466 are disordered; the sequence is QNLRPSPNLRPSPNSRASQNPGAAQPR. The MAGE domain maps to 471-669; the sequence is LQERANKLVK…RDWTAQFMEA (199 aa).

In terms of assembly, interacts with DLX5, DLX7 and MSX2 and forms homomultimers. Interacts with UNC5A. Interacts with TRIM28 and PJA1. Interacts with NGFR/p75NTR and RORA. In terms of tissue distribution, expressed in bone marrow stromal cells from both multiple myeloma patients and healthy donors. Seems to be ubiquitously expressed.

The protein localises to the cytoplasm. The protein resides in the cell membrane. Its subcellular location is the nucleus. Functionally, involved in the apoptotic response after nerve growth factor (NGF) binding in neuronal cells. Inhibits cell cycle progression, and facilitates NGFR-mediated apoptosis. May act as a regulator of the function of DLX family members. May enhance ubiquitin ligase activity of RING-type zinc finger-containing E3 ubiquitin-protein ligases. Proposed to act through recruitment and/or stabilization of the Ubl-conjugating enzyme (E2) at the E3:substrate complex. Plays a role in the circadian rhythm regulation. May act as RORA co-regulator, modulating the expression of core clock genes such as BMAL1 and NFIL3, induced, or NR1D1, repressed. The chain is Melanoma-associated antigen D1 (MAGED1) from Homo sapiens (Human).